The primary structure comprises 1687 residues: Gag-Pol polyprotein (1687 aa).

The N-myristoyl glycine; by host moiety is linked to residue glycine 2. Disordered regions lie at residues 107-126, 136-195, 420-447, and 466-485; these read GQDN…SRLP, LLSE…STVA, HKRE…DRRQ, and GRQA…EGRP. The PTAP/PSAP motif signature appears at 108–111; that stretch reads QDNG. The segment covering 139–153 has biased composition (pro residues); the sequence is EPPPYPTSPPPPPAP. Positions 140–143 match the PPXY motif motif; sequence PPPY. Residues 408 to 453 adopt a coiled-coil conformation; that stretch reads LQDLIKEAEKVYHKRETEEEKQEREKKETEERERRRDRRQEKNLTK. A CCHC-type zinc finger spans residues 490–507; sequence DQCAYCKERGHWARECPR. The 71-residue stretch at 544 to 614 folds into the Peptidase A2 domain; it reads TEFLVDTGAE…CPAPLLGRDL (71 aa). The active-site Protease; shared with dimeric partner is the aspartate 549. The Reverse transcriptase domain maps to 721 to 912; it reads LDLGILVPCQ…EEVTYLGYLL (192 aa). 7 residues coordinate Mg(2+): aspartate 789, aspartate 863, aspartate 864, aspartate 1162, glutamate 1200, aspartate 1221, and aspartate 1291. An RNase H type-1 domain is found at 1153–1299; the sequence is LPGVPAWYTD…ADEAAKQAAQ (147 aa). An HHCC-type zinc finger spans residues 1339–1377; that stretch reads HQLTHLGPDKLLQLVGRTSFHIPNLQSVVREITSKCQVC. The Integrase catalytic domain maps to 1394–1552; that stretch reads RGDRPGVYWE…TPYEILHGGP (159 aa). Aspartate 1405 and aspartate 1464 together coordinate Mg(2+).

As to quaternary structure, homohexamer; further associates as homomultimer. The virus core is composed of a lattice formed from hexagonal rings, each containing six capsid monomers. Interacts (via PPXY motif) with host NEDD4. Interacts (via PSAP motif) with host TSG101. In terms of assembly, the reverse transcriptase is a monomer (Potential). Interacts (via RNase domains) with host release factor ETF1; this interaction is essential for translational readthrough of amber codon between viral gag and pol genes, as well as for viral replication. As to quaternary structure, homodimer. Mg(2+) is required as a cofactor. Specific enzymatic cleavages by the viral protease yield mature proteins. The protease is released by autocatalytic cleavage. The polyprotein is cleaved during and after budding, this process is termed maturation. In terms of processing, phosphorylated on serine residues.

Its subcellular location is the virion. The protein localises to the host cell membrane. It is found in the host late endosome membrane. It localises to the host endosome. The protein resides in the host multivesicular body. Its subcellular location is the host cytoplasm. The enzyme catalyses DNA(n) + a 2'-deoxyribonucleoside 5'-triphosphate = DNA(n+1) + diphosphate. It catalyses the reaction Endonucleolytic cleavage to 5'-phosphomonoester.. With respect to regulation, protease: Most efficiently inhibited by Amprenavir, which is able to block Gag-Pol processing in infected cells. Its function is as follows. Plays a role in budding and is processed by the viral protease during virion maturation outside the cell. During budding, it recruits, in a PPXY-dependent or independent manner, Nedd4-like ubiquitin ligases that conjugate ubiquitin molecules to Gag-Pol, or to Gag-Pol binding host factors. Interaction with HECT ubiquitin ligases probably links the viral protein to the host ESCRT pathway and facilitates release. Targets Gag and gag-pol polyproteins to the plasma membrane via a multipartite membrane binding signal, that includes its myristoylated N-terminus. Also mediates nuclear localization of the pre-integration complex. In terms of biological role, constituent of the pre-integration complex (PIC) which tethers the latter to mitotic chromosomes. This allows the integration of the viral genome into the host DNA. Functionally, forms the spherical core of the virion that encapsulates the genomic RNA-nucleocapsid complex. Its function is as follows. Involved in the packaging and encapsidation of two copies of the genome. Binds with high affinity to conserved UCUG elements within the packaging signal, located near the 5'-end of the genome. This binding is dependent on genome dimerization. Acts as a nucleic acid chaperone which is involved in rearrangement of nucleic acid secondary structures during gRNA retrotranscription. Protease: The aspartyl protease mediates proteolytic cleavages of Gag and Gag-Pol polyproteins during or shortly after the release of the virion from the plasma membrane. Cleavages take place as an ordered, step-wise cascade to yield mature proteins. This process is called maturation. Displays maximal activity during the budding process just prior to particle release from the cell. In terms of biological role, reverse transcriptase/ribonuclease H: RT is a multifunctional enzyme that converts the viral dimeric RNA genome into dsDNA in the cytoplasm, shortly after virus entry into the cell. This enzyme displays a DNA polymerase activity that can copy either DNA or RNA templates, and a ribonuclease H (RNase H) activity that cleaves the RNA strand of RNA-DNA heteroduplexes in a partially processive 3' to 5' endonucleasic mode. Conversion of viral genomic RNA into dsDNA requires many steps. A tRNA binds to the primer-binding site (PBS) situated at the 5' end of the viral RNA. RT uses the 3' end of the tRNA primer to perform a short round of RNA-dependent minus-strand DNA synthesis. The reading proceeds through the U5 region and ends after the repeated (R) region which is present at both ends of viral RNA. The portion of the RNA-DNA heteroduplex is digested by the RNase H, resulting in a ssDNA product attached to the tRNA primer. This ssDNA/tRNA hybridizes with the identical R region situated at the 3' end of viral RNA. This template exchange, known as minus-strand DNA strong stop transfer, can be either intra- or intermolecular. RT uses the 3' end of this newly synthesized short ssDNA to perform the RNA-dependent minus-strand DNA synthesis of the whole template. RNase H digests the RNA template except for a polypurine tract (PPT) situated at the 5' end of the genome. It is not clear if both polymerase and RNase H activities are simultaneous. RNase H probably can proceed both in a polymerase-dependent (RNA cut into small fragments by the same RT performing DNA synthesis) and a polymerase-independent mode (cleavage of remaining RNA fragments by free RTs). Secondly, RT performs DNA-directed plus-strand DNA synthesis using the PPT that has not been removed by RNase H as primers. PPT and tRNA primers are then removed by RNase H. The 3' and 5' ssDNA PBS regions hybridize to form a circular dsDNA intermediate. Strand displacement synthesis by RT to the PBS and PPT ends produces a blunt ended, linear dsDNA copy of the viral genome that includes long terminal repeats (LTRs) at both ends. Functionally, catalyzes viral DNA integration into the host chromosome, by performing a series of DNA cutting and joining reactions. This enzyme activity takes place after virion entry into a cell and reverse transcription of the RNA genome in dsDNA. The first step in the integration process is 3' processing. This step requires a complex comprising the viral genome, matrix protein and integrase. This complex is called the pre-integration complex (PIC). The integrase protein removes 2 nucleotides from each 3' end of the viral DNA, leaving recessed CA OH's at the 3' ends. In the second step that requires cell division, the PIC enters cell nucleus. In the third step, termed strand transfer, the integrase protein joins the previously processed 3' ends to the 5' ends of strands of target cellular DNA at the site of integration. The last step is viral DNA integration into host chromosome. The protein is Gag-Pol polyprotein (pro-pol) of Phascolarctos cinereus (Koala).